We begin with the raw amino-acid sequence, 213 residues long: Uridine kinase (213 aa).

15-22 (GASASGKS) lines the ATP pocket.

Belongs to the uridine kinase family.

The protein resides in the cytoplasm. It catalyses the reaction uridine + ATP = UMP + ADP + H(+). The enzyme catalyses cytidine + ATP = CMP + ADP + H(+). The protein operates within pyrimidine metabolism; CTP biosynthesis via salvage pathway; CTP from cytidine: step 1/3. It functions in the pathway pyrimidine metabolism; UMP biosynthesis via salvage pathway; UMP from uridine: step 1/1. The protein is Uridine kinase of Erwinia tasmaniensis (strain DSM 17950 / CFBP 7177 / CIP 109463 / NCPPB 4357 / Et1/99).